The following is a 469-amino-acid chain: Glutamate--tRNA ligase (469 aa).

The short motif at 8–18 (PSPTGFLHVGG) is the 'HIGH' region element. Cysteine 97, cysteine 99, cysteine 124, and aspartate 126 together coordinate Zn(2+). The 'KMSKS' region signature appears at 236–240 (KLSKR). An ATP-binding site is contributed by lysine 239.

The protein belongs to the class-I aminoacyl-tRNA synthetase family. Glutamate--tRNA ligase type 1 subfamily. In terms of assembly, monomer. Requires Zn(2+) as cofactor.

The protein localises to the cytoplasm. It carries out the reaction tRNA(Glu) + L-glutamate + ATP = L-glutamyl-tRNA(Glu) + AMP + diphosphate. Its function is as follows. Catalyzes the attachment of glutamate to tRNA(Glu) in a two-step reaction: glutamate is first activated by ATP to form Glu-AMP and then transferred to the acceptor end of tRNA(Glu). The protein is Glutamate--tRNA ligase of Francisella philomiragia subsp. philomiragia (strain ATCC 25017 / CCUG 19701 / FSC 153 / O#319-036).